Here is a 120-residue protein sequence, read N- to C-terminus: Aspartate 1-decarboxylase (120 aa).

S25 (schiff-base intermediate with substrate; via pyruvic acid) is an active-site residue. S25 is modified (pyruvic acid (Ser)). T57 lines the substrate pocket. Y58 functions as the Proton donor in the catalytic mechanism. 72 to 74 (GAA) provides a ligand contact to substrate.

This sequence belongs to the PanD family. Heterooctamer of four alpha and four beta subunits. The cofactor is pyruvate. Post-translationally, is synthesized initially as an inactive proenzyme, which is activated by self-cleavage at a specific serine bond to produce a beta-subunit with a hydroxyl group at its C-terminus and an alpha-subunit with a pyruvoyl group at its N-terminus.

Its subcellular location is the cytoplasm. It carries out the reaction L-aspartate + H(+) = beta-alanine + CO2. It functions in the pathway cofactor biosynthesis; (R)-pantothenate biosynthesis; beta-alanine from L-aspartate: step 1/1. Its function is as follows. Catalyzes the pyruvoyl-dependent decarboxylation of aspartate to produce beta-alanine. The polypeptide is Aspartate 1-decarboxylase (Helicobacter hepaticus (strain ATCC 51449 / 3B1)).